The following is an 847-amino-acid chain: FAST kinase domain-containing protein 1, mitochondrial (847 aa).

Residue Lys-360 is modified to N6-acetyllysine. Residues 777 to 837 enclose the RAP domain; that stretch reads IALEFLDSKA…KDARMDYLRE (61 aa).

This sequence belongs to the FAST kinase family. In terms of tissue distribution, expression detected in spleen, thymus, testis, ovary, colon, heart, smooth muscle, kidney, brain, lung, liver and white adipose tissue with highest expression in heart.

The protein localises to the mitochondrion. In terms of biological role, involved in the down-regulation of mitochondrial MT-ND3 mRNA levels which leads to decreased respiratory complex I abundance and activity. This chain is FAST kinase domain-containing protein 1, mitochondrial (FASTKD1), found in Homo sapiens (Human).